The primary structure comprises 223 residues: Large ribosomal subunit protein bL25 (223 aa).

Positions glutamate 198 to glutamate 223 are disordered.

It belongs to the bacterial ribosomal protein bL25 family. CTC subfamily. In terms of assembly, part of the 50S ribosomal subunit; part of the 5S rRNA/L5/L18/L25 subcomplex. Contacts the 5S rRNA. Binds to the 5S rRNA independently of L5 and L18.

This is one of the proteins that binds to the 5S RNA in the ribosome where it forms part of the central protuberance. The polypeptide is Large ribosomal subunit protein bL25 (Thermomicrobium roseum (strain ATCC 27502 / DSM 5159 / P-2)).